The chain runs to 309 residues: Homoserine O-succinyltransferase (309 aa).

The Acyl-thioester intermediate role is filled by Cys142. Lys163 and Ser192 together coordinate substrate. His235 acts as the Proton acceptor in catalysis. Residue Glu237 is part of the active site. Residue Arg249 coordinates substrate.

This sequence belongs to the MetA family. Homodimer.

The protein resides in the cytoplasm. It catalyses the reaction L-homoserine + succinyl-CoA = O-succinyl-L-homoserine + CoA. Its pathway is amino-acid biosynthesis; L-methionine biosynthesis via de novo pathway; O-succinyl-L-homoserine from L-homoserine: step 1/1. Transfers a succinyl group from succinyl-CoA to L-homoserine, forming succinyl-L-homoserine. This is Homoserine O-succinyltransferase from Escherichia coli (strain ATCC 8739 / DSM 1576 / NBRC 3972 / NCIMB 8545 / WDCM 00012 / Crooks).